The sequence spans 108 residues: Probable endonuclease 4 (108 aa).

Residues histidine 2, histidine 36, aspartate 49, histidine 51, and glutamate 81 each coordinate Zn(2+).

This sequence belongs to the AP endonuclease 2 family. The cofactor is Zn(2+).

The enzyme catalyses Endonucleolytic cleavage to 5'-phosphooligonucleotide end-products.. Its function is as follows. Endonuclease IV plays a role in DNA repair. It cleaves phosphodiester bonds at apurinic or apyrimidinic (AP) sites, generating a 3'-hydroxyl group and a 5'-terminal sugar phosphate. The protein is Probable endonuclease 4 (nfo) of Thermotoga neapolitana.